Consider the following 770-residue polypeptide: Protein PAT1 homolog 1 (770 aa).

The interval 1 to 42 (MFRYESLEDCPLDEDEDAFQGLGEEDEEIDQFNDDTFGSGAV) is disordered. The tract at residues 1–84 (MFRYESLEDC…EMDLLGDHEE (84 aa)) is region A; interaction with DDX6/RCK. The tract at residues 1–397 (MFRYESLEDC…HRVSHQDHLR (397 aa)) is involved in nuclear foci localization. Residues 7–33 (LEDCPLDEDEDAFQGLGEEDEEIDQFN) are compositionally biased toward acidic residues. Residues 85 to 388 (NLAERLSKMV…LNGTGDRGGH (304 aa)) form a region N; interaction with decapping machinery region. Residues 86-95 (LAERLSKMVI) carry the Nuclear export signal motif. The residue at position 177 (S177) is a Phosphoserine. At T178 the chain carries Phosphothreonine. S179 and S184 each carry phosphoserine. A Phosphothreonine modification is found at T194. 3 positions are modified to asymmetric dimethylarginine: R217, R223, and R263. Residues 223-397 (RYPAPYGERM…HRVSHQDHLR (175 aa)) form an involved in RNA-binding region. S278 is subject to Phosphoserine. R284 is modified (asymmetric dimethylarginine). Disordered stretches follow at residues 320-341 (SAPP…PHLQ) and 369-394 (QLQS…SHQD). Residues 321–337 (APPPATPPPQQHPPGPG) show a composition bias toward pro residues. Positions 369-380 (QLQSRNQHRNLN) are enriched in low complexity. An Omega-N-methylarginine modification is found at R385. A compositionally biased stretch (basic and acidic residues) spans 385 to 394 (RGGHRVSHQD). The segment at 389–448 (RVSHQDHLRKDPYANLMLQREKDWVSKIQMMQLQSTDPYLDDFYYQNYFEKLEKSSAAEE) is region H. The tract at residues 398 to 770 (KDPYANLMLQ…TKLQLVQGMR (373 aa)) is involved in nuclear speckle localization. Residues 449–770 (MQGDGPKKER…TKLQLVQGMR (322 aa)) are region C.

Belongs to the PAT1 family. Interacts (via region A) with DDX6/RCK. Interacts (via region H and region C) with LSM1 and LSM4. Interacts (via region N) with DCP1A, DCP2, EDC3, EDC4 and XRN1. Interacts with the CCR4-NOT complex. Interacts with the Lsm-containing SMN-Sm protein complex. Interacts with EIF4ENIF1/4E-T.

It is found in the cytoplasm. It localises to the P-body. The protein localises to the nucleus. The protein resides in the PML body. Its subcellular location is the nucleus speckle. RNA-binding protein involved in deadenylation-dependent decapping of mRNAs, leading to the degradation of mRNAs. Acts as a scaffold protein that connects deadenylation and decapping machinery. Required for cytoplasmic mRNA processing body (P-body) assembly. In Rattus norvegicus (Rat), this protein is Protein PAT1 homolog 1 (Patl1).